The following is an 829-amino-acid chain: Leucine--tRNA ligase (829 aa).

A 'HIGH' region motif is present at residues 42–52 (PYPSGRIHMGH). Positions 584–588 (KMSKS) match the 'KMSKS' region motif. K587 lines the ATP pocket.

It belongs to the class-I aminoacyl-tRNA synthetase family.

The protein localises to the cytoplasm. The enzyme catalyses tRNA(Leu) + L-leucine + ATP = L-leucyl-tRNA(Leu) + AMP + diphosphate. In Syntrophobacter fumaroxidans (strain DSM 10017 / MPOB), this protein is Leucine--tRNA ligase.